The sequence spans 813 residues: Striatin-interacting protein 1 homolog (813 aa).

Disordered regions lie at residues 1 to 41 (MDGV…SEAP) and 307 to 379 (RAAS…RDEV). A compositionally biased stretch (polar residues) spans 9–18 (NNKQKQNQML). Positions 22–35 (MRGEFTRNQRKDSE) are enriched in basic and acidic residues. Residues 307 to 316 (RAASPPASAS) show a composition bias toward low complexity. Phosphoserine is present on serine 310. Residues 331 to 352 (KALIKQDNLDTFNEKDPYKADD) are compositionally biased toward basic and acidic residues. Residues 353–367 (SHEDEEENDDNDNSL) are compositionally biased toward acidic residues.

Belongs to the STRIP family. As to quaternary structure, part of the core of STRIPAK complexes composed of PP2A catalytic and scaffolding subunits, the striatins (PP2A regulatory subunits), the striatin-associated proteins MOB4, STRIP1 and STRIP2, PDCD10 and members of the STE20 kinases, such as STK24 and STK26.

The protein resides in the cytoplasm. Its function is as follows. Plays a role in the regulation of cell morphology and cytoskeletal organization. Required in the cortical actin filament dynamics and cell shape. Part of the striatin-interacting phosphatase and kinase (STRIPAK) complexes. STRIPAK complexes have critical roles in protein (de)phosphorylation and are regulators of multiple signaling pathways including Hippo, MAPK, nuclear receptor and cytoskeleton remodeling. Different types of STRIPAK complexes are involved in a variety of biological processes such as cell growth, differentiation, apoptosis, metabolism and immune regulation. The polypeptide is Striatin-interacting protein 1 homolog (strip1) (Danio rerio (Zebrafish)).